The following is a 1849-amino-acid chain: MTEVDDGAELLFFDTFSHEDITDINLDLVQFPKPVFITQVRIIPLGARVQADFPGGVRLGATNPSKFDLEFFVNDLGMPGASAFENLGLLRYNQNDCIHLDCSREKIPTDGLVLRGWYSTITLAVYGILTNSVTQPIASPTLPCEPAGPEMCNLSTEAHNVLLQEEVLKDDWAEPIPTELLVPHKAVVVSDYEHDDIEYGLSREHQHYHQHVDEEQREMRRLRRSTHSTDRSPPPPPMRTHTHSESNEREYIRCSRDKGSRDWSRSPEYSSHRSRRKRSDRSRSDADEHKWPRTPPASIDSPIRPRSPDAMDYDDDDSRSHYKMQASRGYRHSSESLHRDRDDEERSGTPQEQFEPILSDDEIIGDDEEDEAEDVAAAAEYERELEFAAAVAPPAIDAFEPWQRPLLVYEGDLAAHLNKELETLRLLFKKLSLQTRCESVTAFSDEHGLSADEREQFVYLGEQLNNQLGYLSQHYKRRNFVLQQFFSHDDAHLRQAANVLQVALSFQAACMQPQPAFKIRHIKLGARMAELLGSNEQLFGHLLQEQDFDLFEAVLSLYKEPYMALSIKLQLLKAVYAMLDTRLGVQNFLSPKTNGYQMVMDFLKTAKLTRTKYALQAIIKKLHLYEALASVQQCCRQIFLDTDASVPETTPDPNRLDVCQKIEFAFQMLMDALTDSQLSYQQPRRFLPVSKKFEVLTDPTAQRSFGNALQSYFVQHSLAEALLVILSNPKEVPASTFLCTLDLMHTLLRSHVGIDYFVDDAFPVTQMIVSILLGLEEVPSQPRVVEAKPEGKEDKPMDDSVEQKPDEGKAAGIRAAEEPKMAPPPVVRKPILRPVLPRLARLGIELSYKVQTRYHLDAITFTAACPEYDTIKIATHMHSIYSQTCDPSGRQHTIEVLGLNNNLKIFMDLIKKEQRLQTQRQLLSSPGTKYKSPVLSYAVDMVDACVRYCEQLDYLIEHGGVILELAKNHETFEPSVSAVLQEMYVYMKPLEAINVFVYDDIMPLVEVIGRSLDYLTTFPGDLIMALRILRFLAISKPRQKSHGTEELKHRFVALQLYAADGVQLLLQIMERLCTHFEQPGIHAPALMTIQGVHCCQIMLPTLQILRELLSYAILCRDGTYKDLTAIDHLVKVYYLLYYYPSRCQAGAEVEQCKLEVVKSLLAYTQPHEQDAESLHKSLWTLMVREVLKNIDGPAHFIPGLKLLAELLPLPLPMPQPLCDQLKQQHKQRLIIERKLWSAHLHPQSGQIAKLVEALAPSSFPQLAELLQRVCMQLSDLAPNMTLLIAKTITELLCTEYQTSNCIPTTNLERLLRFSTRLCAFAPLKSSMLSILSGKFWELFQSLLALNEFNEVVTNCQEAVHRILDSFLDSGISLISHKSTAQPALNLSAALPPKELIPRIIDAVFSNLTSVEVTHGISILAVRNLVILTEHDFTFYHLAQLLKQKLTEFQAWMERVILHNETVEYHANIESLILLLRSLTQIEPPPPMCAMPNRTLKLGAMELAQLVEFQDIDMARPPVLARILRVLEKYKLLANEAALCDLKQLIVLHASRQEAMGSASMETPAVETENDGANPAASCSTSSSGGSLNVEPFLPQAEGIVTQYDARPIFTRYCATAENPQLTARYWLEPLPIELIEDMNEPLYERIACDLTDLANVCLNPDLATSGESKRTLNLSGSPQSNREMTPTAPCFRTRRVEVEPATGRPEKKMFLSSVRGRGFARPPPSRGDLFRSRPPNTSRPPSLHVDDFLALETCGAQPTGPTGYNKIPSMLRGSRVGRNRGSRISAAAAFRQKKMMRIGSPSSWTESGGGSYRSTSESHFGGSDSHYSSPHYSGRSRGRGLRSRPPYLR.

Composition is skewed to basic and acidic residues over residues 206-219 (QHYH…QREM), 242-265 (THSE…DWSR), 281-291 (RSRSDADEHKW), 332-347 (HSSE…EERS), and 785-818 (VEAK…AAEE). Disordered stretches follow at residues 206–364 (QHYH…DEII), 783–818 (RVVE…AAEE), 1557–1584 (SASM…SSSG), 1666–1686 (GESK…EMTP), 1715–1782 (RGRG…NRGS), and 1798–1849 (IGSP…PYLR). Positions 1671-1684 (TLNLSGSPQSNREM) are enriched in polar residues. The span at 1732-1742 (SRPPNTSRPPS) shows a compositional bias: low complexity. Residues 1800 to 1818 (SPSSWTESGGGSYRSTSES) show a composition bias toward polar residues.

It belongs to the vir family. As to quaternary structure, component of the WMM complex, a N6-methyltransferase complex composed of a catalytic subcomplex, named MAC, and of an associated subcomplex, named MACOM. The MAC subcomplex is composed of Ime4/Mettl3 and Mettl14. The MACOM subcomplex is composed of fl(2)d, Flacc/Xio, Hakai, vir, and, in some cases of nito. Part of a complex containing fl(2)d, Sxl and vir.

The protein localises to the nucleus. Its function is as follows. Associated component of the WMM complex, a complex that mediates N6-methyladenosine (m6A) methylation of mRNAs, a modification that plays a role in the efficiency of mRNA splicing and is required for sex determination. Required for sex determination and dosage compensation via Sxl alternative splicing: m6A methylation acts as a key regulator of Sxl pre-mRNA and promotes female-specific alternative splicing of Sxl, which determines female physiognomy. M6A methylation is also required for neuronal functions. Required for proper inclusion of regulated exons in Ubx transcripts, leading to isoforms Ia/b and IIa/b. The protein is Protein virilizer (vir) of Drosophila pseudoobscura pseudoobscura (Fruit fly).